The sequence spans 290 residues: N-acetylmannosamine kinase (290 aa).

Residues 6 to 13 and 132 to 139 each bind ATP; these read ALDIGGTK and GVGGGIIL. Residues His156, Cys166, Cys168, and Cys173 each contribute to the Zn(2+) site.

This sequence belongs to the ROK (NagC/XylR) family. NanK subfamily. As to quaternary structure, homodimer.

It catalyses the reaction an N-acyl-D-mannosamine + ATP = an N-acyl-D-mannosamine 6-phosphate + ADP + H(+). Its pathway is amino-sugar metabolism; N-acetylneuraminate degradation; D-fructose 6-phosphate from N-acetylneuraminate: step 2/5. In terms of biological role, catalyzes the phosphorylation of N-acetylmannosamine (ManNAc) to ManNAc-6-P. This chain is N-acetylmannosamine kinase, found in Yersinia pestis (strain Pestoides F).